The primary structure comprises 202 residues: Putative chromophore lyase CpcV (202 aa).

The protein belongs to the CpcS/CpeS biliprotein lyase family.

Functionally, covalently attaches a chromophore to Cys residue(s) of phycobiliproteins. The protein is Putative chromophore lyase CpcV (cpcV) of Picosynechococcus sp. (strain ATCC 27264 / PCC 7002 / PR-6) (Agmenellum quadruplicatum).